Reading from the N-terminus, the 187-residue chain is MASTSDFKNGLVLQIEGQLWTIIEFQHVKPGKGPAFVRTKLKNVLSGKVVDKTFNAGVKVETATVDRRDMTYLYHDGTDYIFMDGDTYDQISISEATVGDGARFMLENMAVQVATHEDVPLFVELPVTVELVVQHTDPGLQGDRSTGGTKPATLETGAEINVPLFINTGDKLKVDSRDGNYLGRVNS.

It belongs to the elongation factor P family.

Its subcellular location is the cytoplasm. It functions in the pathway protein biosynthesis; polypeptide chain elongation. In terms of biological role, involved in peptide bond synthesis. Stimulates efficient translation and peptide-bond synthesis on native or reconstituted 70S ribosomes in vitro. Probably functions indirectly by altering the affinity of the ribosome for aminoacyl-tRNA, thus increasing their reactivity as acceptors for peptidyl transferase. The sequence is that of Elongation factor P from Rhodococcus jostii (strain RHA1).